The chain runs to 59 residues: UPF0434 protein VS_2060 (59 aa).

Belongs to the UPF0434 family.

The protein is UPF0434 protein VS_2060 of Vibrio atlanticus (strain LGP32) (Vibrio splendidus (strain Mel32)).